We begin with the raw amino-acid sequence, 239 residues long: Increased recombination centers protein 22-2 (239 aa).

The signal sequence occupies residues 1–19 (MKLSTIFTAFAATIATVAG). At 20–161 (YETTGSKQTV…AAVSFFDPRL (142 aa)) the chain is on the lumenal side. A helical transmembrane segment spans residues 162-182 (IFLELVLLITFAGLIYVGYEI). The Cytoplasmic portion of the chain corresponds to 183–239 (WGKQYFKGVAPVKAKKVSAAKASSPVASGPSTTSATGYDTNWIPESHLKQKKTKKVN). Positions 201-213 (AAKASSPVASGPS) are enriched in low complexity. Positions 201-222 (AAKASSPVASGPSTTSATGYDT) are disordered.

This sequence belongs to the IRC22 family.

It is found in the endoplasmic reticulum membrane. Is probably involved in a pathway contributing to genomic integrity. In Candida albicans (strain WO-1) (Yeast), this protein is Increased recombination centers protein 22-2 (IRC22-2).